The chain runs to 245 residues: 14-3-3 protein theta (245 aa).

Residue methionine 1 is modified to N-acetylmethionine. N6-acetyllysine is present on lysine 3. At lysine 49 the chain carries N6-acetyllysine; alternate. Lysine 49 participates in a covalent cross-link: Glycyl lysine isopeptide (Lys-Gly) (interchain with G-Cter in SUMO2); alternate. Lysine 68 carries the post-translational modification N6-acetyllysine. Residue tyrosine 82 is modified to 3'-nitrotyrosine. Position 92 is a phosphoserine (serine 92). Position 104 is a 3'-nitrotyrosine (tyrosine 104). Position 115 is an N6-acetyllysine (lysine 115). Serine 232 is modified (phosphoserine; by CK1).

It belongs to the 14-3-3 family. In terms of assembly, homodimer. Interacts with CDKN1B ('Thr-198' phosphorylated form); the interaction translocates CDKN1B to the cytoplasm. Interacts with SSH1. Interacts with GAB2. Interacts with RGS7 (phosphorylated form). Interacts with CDK16. Interacts with the 'Ser-241' phosphorylated form of PDPK1. Interacts with the 'Thr-369' phosphorylated form of DAPK2. Interacts with PI4KB, TBC1D22A and TBC1D22B. Interacts with SLITRK1. Interacts with RIPOR2. Interacts with INAVA; the interaction increases upon PRR (pattern recognition receptor) stimulation and is required for cellular signaling pathway activation and cytokine secretion. Interacts with MARK2, MARK3 and MARK4. Interacts with MEFV.

The protein localises to the cytoplasm. In terms of biological role, adapter protein implicated in the regulation of a large spectrum of both general and specialized signaling pathways. Binds to a large number of partners, usually by recognition of a phosphoserine or phosphothreonine motif. Binding generally results in the modulation of the activity of the binding partner. Negatively regulates the kinase activity of PDPK1. The chain is 14-3-3 protein theta (Ywhaq) from Mus musculus (Mouse).